Consider the following 238-residue polypeptide: N-terminal acetyltransferase A complex catalytic subunit ARD1 (238 aa).

Positions 35 to 195 (YHILSWPEAS…DAYAMKKVLK (161 aa)) constitute an N-acetyltransferase domain.

The protein belongs to the acetyltransferase family. ARD1 subfamily. Component of the N-terminal acetyltransferase A (NatA) complex, which is composed of ARD1, NAT1 and NAT5. Can self-associate.

The protein resides in the cytoplasm. It carries out the reaction N-terminal glycyl-[protein] + acetyl-CoA = N-terminal N(alpha)-acetylglycyl-[protein] + CoA + H(+). The catalysed reaction is N-terminal L-alanyl-[protein] + acetyl-CoA = N-terminal N(alpha)-acetyl-L-alanyl-[protein] + CoA + H(+). It catalyses the reaction N-terminal L-seryl-[protein] + acetyl-CoA = N-terminal N(alpha)-acetyl-L-seryl-[protein] + CoA + H(+). The enzyme catalyses N-terminal L-valyl-[protein] + acetyl-CoA = N-terminal N(alpha)-acetyl-L-valyl-[protein] + CoA + H(+). It carries out the reaction N-terminal L-cysteinyl-[protein] + acetyl-CoA = N-terminal N(alpha)-acetyl-L-cysteinyl-[protein] + CoA + H(+). The catalysed reaction is N-terminal L-threonyl-[protein] + acetyl-CoA = N-terminal N(alpha)-acetyl-L-threonyl-[protein] + CoA + H(+). In terms of biological role, catalytic component of the NatA N-terminal acetyltransferase, which catalyzes acetylation of proteins beginning with Met-Ser, Met-Gly and Met-Ala. N-acetylation plays a role in normal eukaryotic translation and processing, protect against proteolytic degradation and protein turnover. The sequence is that of N-terminal acetyltransferase A complex catalytic subunit ARD1 (ARD1) from Saccharomyces cerevisiae (strain ATCC 204508 / S288c) (Baker's yeast).